We begin with the raw amino-acid sequence, 1026 residues long: Exportin-T (1026 aa).

This sequence belongs to the exportin family.

The protein resides in the nucleus. The protein localises to the cytoplasm. TRNA nucleus export receptor which facilitates tRNA translocation across the nuclear pore complex. Involved in pre-tRNA splicing, probably by affecting the interaction of pre-tRNA with splicing endonuclease. This Aspergillus oryzae (strain ATCC 42149 / RIB 40) (Yellow koji mold) protein is Exportin-T (los1).